Consider the following 54-residue polypeptide: Protein Vpw (54 aa).

In Bos taurus (Bovine), this protein is Protein Vpw (vpw).